The sequence spans 273 residues: Large ribosomal subunit protein uL2 (273 aa).

The tract at residues 196 to 273 is disordered; it reads GNSDHGLESS…SSKYIIERRK (78 aa). Composition is skewed to basic residues over residues 209–220 and 255–264; these read GRTRWMGRRPRN and LKTRAPKKQS.

This sequence belongs to the universal ribosomal protein uL2 family. In terms of assembly, part of the 50S ribosomal subunit. Forms a bridge to the 30S subunit in the 70S ribosome.

In terms of biological role, one of the primary rRNA binding proteins. Required for association of the 30S and 50S subunits to form the 70S ribosome, for tRNA binding and peptide bond formation. It has been suggested to have peptidyltransferase activity; this is somewhat controversial. Makes several contacts with the 16S rRNA in the 70S ribosome. The polypeptide is Large ribosomal subunit protein uL2 (Phocaeicola vulgatus (strain ATCC 8482 / DSM 1447 / JCM 5826 / CCUG 4940 / NBRC 14291 / NCTC 11154) (Bacteroides vulgatus)).